We begin with the raw amino-acid sequence, 217 residues long: Large ribosomal subunit protein uL1 (217 aa).

The protein belongs to the universal ribosomal protein uL1 family.

This is Large ribosomal subunit protein uL1 (RpL10A) from Spodoptera frugiperda (Fall armyworm).